The following is a 342-amino-acid chain: Putative TPR repeat-containing protein R856 (342 aa).

7 TPR repeats span residues 36-69, 77-110, 119-152, 161-194, 203-236, 245-278, and 291-324; these read VHIF…IFNG, FYSV…IKDM, VYAL…NEKL, AFVL…YREK, AFTI…FNKI, AFSL…YKNV, and ASCL…FEST.

This Acanthamoeba polyphaga mimivirus (APMV) protein is Putative TPR repeat-containing protein R856.